A 62-amino-acid polypeptide reads, in one-letter code: Conotoxin Im11.9 (62 aa).

The signal sequence occupies residues 1 to 22; that stretch reads MFRVTSVLLVIVLLNLVVLTNA. Disulfide bonds link cysteine 23–cysteine 33, cysteine 27–cysteine 38, cysteine 32–cysteine 41, and cysteine 37–cysteine 46. Positions 23-49 are excised as a propeptide; sequence CHMDCSKMTCCSGICCFYCGRPMCPGT.

Belongs to the conotoxin I2 superfamily. As to expression, expressed by the venom duct.

Its subcellular location is the secreted. Probable neurotoxin. In Conus imperialis (Imperial cone), this protein is Conotoxin Im11.9.